Consider the following 732-residue polypeptide: Elongation factor 2 (732 aa).

The region spanning glutamate 19–glutamate 228 is the tr-type G domain. GTP-binding positions include alanine 28–threonine 35, aspartate 94–histidine 98, and asparagine 148–aspartate 151. Residue histidine 598 is modified to Diphthamide.

The protein belongs to the TRAFAC class translation factor GTPase superfamily. Classic translation factor GTPase family. EF-G/EF-2 subfamily.

It localises to the cytoplasm. Its function is as follows. Catalyzes the GTP-dependent ribosomal translocation step during translation elongation. During this step, the ribosome changes from the pre-translocational (PRE) to the post-translocational (POST) state as the newly formed A-site-bound peptidyl-tRNA and P-site-bound deacylated tRNA move to the P and E sites, respectively. Catalyzes the coordinated movement of the two tRNA molecules, the mRNA and conformational changes in the ribosome. The protein is Elongation factor 2 (fusA) of Thermoplasma acidophilum (strain ATCC 25905 / DSM 1728 / JCM 9062 / NBRC 15155 / AMRC-C165).